Reading from the N-terminus, the 372-residue chain is tRNA-specific 2-thiouridylase MnmA 1 (372 aa).

ATP is bound by residues 26-33 (AISGGVDS) and M52. C118 acts as the Nucleophile in catalysis. C118 and C214 are disulfide-bonded. G142 lines the ATP pocket. The interaction with tRNA stretch occupies residues 164-166 (KDQ). The Cysteine persulfide intermediate role is filled by C214.

The protein belongs to the MnmA/TRMU family.

The protein localises to the cytoplasm. The enzyme catalyses S-sulfanyl-L-cysteinyl-[protein] + uridine(34) in tRNA + AH2 + ATP = 2-thiouridine(34) in tRNA + L-cysteinyl-[protein] + A + AMP + diphosphate + H(+). Functionally, catalyzes the 2-thiolation of uridine at the wobble position (U34) of tRNA, leading to the formation of s(2)U34. In Syntrophus aciditrophicus (strain SB), this protein is tRNA-specific 2-thiouridylase MnmA 1.